Consider the following 492-residue polypeptide: Asparagine--tRNA ligase, mitochondrial (492 aa).

It belongs to the class-II aminoacyl-tRNA synthetase family.

Its subcellular location is the mitochondrion matrix. It catalyses the reaction tRNA(Asn) + L-asparagine + ATP = L-asparaginyl-tRNA(Asn) + AMP + diphosphate + H(+). Its function is as follows. Catalyzes the attachment of asparagine to tRNA(Asn) in the mitochondrion. This chain is Asparagine--tRNA ligase, mitochondrial (SLM5), found in Saccharomyces cerevisiae (strain ATCC 204508 / S288c) (Baker's yeast).